The chain runs to 223 residues: Neurotrophic factor BDNF precursor form (223 aa).

An N-terminal signal peptide occupies residues 1-5; it reads SCMKA. The propeptide occupies 6–114; the sequence is APMKEVSLRG…AANMSMRVRR (109 aa). The N-linked (GlcNAc...) asparagine glycan is linked to asparagine 107. 2 cysteine pairs are disulfide-bonded: cysteine 127/cysteine 194 and cysteine 172/cysteine 223.

Belongs to the NGF-beta family.

The protein resides in the secreted. Its function is as follows. Promotes the survival of neuronal populations that are all located either in the central nervous system or directly connected to it. The sequence is that of Neurotrophic factor BDNF precursor form (BDNF) from Ramphotyphlops sp. (strain YPM 13663) (Blind snake).